Reading from the N-terminus, the 311-residue chain is tRNA-cytidine(32) 2-sulfurtransferase (311 aa).

Residues 47–52 (SGGKDS) carry the PP-loop motif motif. 3 residues coordinate [4Fe-4S] cluster: cysteine 122, cysteine 125, and cysteine 213.

It belongs to the TtcA family. In terms of assembly, homodimer. The cofactor is Mg(2+). [4Fe-4S] cluster is required as a cofactor.

The protein localises to the cytoplasm. It carries out the reaction cytidine(32) in tRNA + S-sulfanyl-L-cysteinyl-[cysteine desulfurase] + AH2 + ATP = 2-thiocytidine(32) in tRNA + L-cysteinyl-[cysteine desulfurase] + A + AMP + diphosphate + H(+). It functions in the pathway tRNA modification. Catalyzes the ATP-dependent 2-thiolation of cytidine in position 32 of tRNA, to form 2-thiocytidine (s(2)C32). The sulfur atoms are provided by the cysteine/cysteine desulfurase (IscS) system. The protein is tRNA-cytidine(32) 2-sulfurtransferase of Citrobacter koseri (strain ATCC BAA-895 / CDC 4225-83 / SGSC4696).